Reading from the N-terminus, the 708-residue chain is Elongation factor G (708 aa).

The tr-type G domain occupies 9 to 289 (MFTRNIGIMA…AVCAFLPSPE (281 aa)). Residues 18 to 25 (AHIDAGKT), 86 to 90 (DTPGH), and 140 to 143 (NKMD) each bind GTP.

Belongs to the TRAFAC class translation factor GTPase superfamily. Classic translation factor GTPase family. EF-G/EF-2 subfamily.

Its subcellular location is the cytoplasm. Functionally, catalyzes the GTP-dependent ribosomal translocation step during translation elongation. During this step, the ribosome changes from the pre-translocational (PRE) to the post-translocational (POST) state as the newly formed A-site-bound peptidyl-tRNA and P-site-bound deacylated tRNA move to the P and E sites, respectively. Catalyzes the coordinated movement of the two tRNA molecules, the mRNA and conformational changes in the ribosome. This chain is Elongation factor G, found in Parabacteroides distasonis (strain ATCC 8503 / DSM 20701 / CIP 104284 / JCM 5825 / NCTC 11152).